We begin with the raw amino-acid sequence, 252 residues long: Autophagy-related protein 27 (252 aa).

Positions 1–15 (MILASLLTFATAALA) are cleaved as a signal peptide. One can recognise an MRH domain in the interval 16 to 161 (FDCSDKELER…SMKTKAACIT (146 aa)). The Lumenal portion of the chain corresponds to 16 to 176 (FDCSDKELER…KKEKHDNGES (161 aa)). 3 cysteine pairs are disulfide-bonded: Cys18–Cys57, Cys66–Cys73, and Cys130–Cys159. The N-linked (GlcNAc...) asparagine glycan is linked to Asn49. Residues 177–197 (WGWFTWIFIFLVLFLSIYIIG) form a helical membrane-spanning segment. The Cytoplasmic portion of the chain corresponds to 198–252 (GAWFQYNKGNAIDFQSALKEVVENFIELLKGLPSFGKEIIEKFTGRSNRGEYSAV).

The protein belongs to the ATG27 family.

The protein localises to the cytoplasmic vesicle membrane. Its subcellular location is the golgi apparatus membrane. It localises to the mitochondrion membrane. It is found in the preautophagosomal structure membrane. In terms of biological role, plays a key role in autophagy. Effector of VPS34 phosphatidylinositol 3-phosphate kinase signaling. Regulates the cytoplasm to vacuole transport (Cvt) vesicle formation. Plays a role in ATG protein retrieval from the pre-autophagosomal structure (PAS) and is especially required for autophagy-dependent cycling of ATG9. Finally, plays an important role in biofilm formation and resistance to antifungal compounds such as fluconazole, itraconazole, terbinafine and caspofungin. The polypeptide is Autophagy-related protein 27 (Candida albicans (strain SC5314 / ATCC MYA-2876) (Yeast)).